Here is a 650-residue protein sequence, read N- to C-terminus: DNA ligase (650 aa).

Residues 30 to 34 (DEQYD) and 79 to 80 (SL) each bind NAD(+). Lys110 serves as the catalytic N6-AMP-lysine intermediate. NAD(+) contacts are provided by Arg131, Glu165, and Lys304. Positions 398, 401, 414, and 419 each coordinate Zn(2+). Positions 573–650 (DNNNVFFNKT…EEEFLAQINK (78 aa)) constitute a BRCT domain.

Belongs to the NAD-dependent DNA ligase family. LigA subfamily. The cofactor is Mg(2+). Requires Mn(2+) as cofactor.

It catalyses the reaction NAD(+) + (deoxyribonucleotide)n-3'-hydroxyl + 5'-phospho-(deoxyribonucleotide)m = (deoxyribonucleotide)n+m + AMP + beta-nicotinamide D-nucleotide.. DNA ligase that catalyzes the formation of phosphodiester linkages between 5'-phosphoryl and 3'-hydroxyl groups in double-stranded DNA using NAD as a coenzyme and as the energy source for the reaction. It is essential for DNA replication and repair of damaged DNA. The polypeptide is DNA ligase (Helicobacter hepaticus (strain ATCC 51449 / 3B1)).